The following is a 377-amino-acid chain: All-trans-retinol dehydrogenase [NAD(+)] ADH4 (377 aa).

Residue C47 participates in Zn(2+) binding. An NAD(+)-binding site is contributed by T49. Zn(2+)-binding residues include H68, C98, C101, C104, C112, and C179. Residues 204–209 (GLGCVG), D228, K233, 297–299 (VGA), 320–322 (TFF), and R372 contribute to the NAD(+) site.

The protein belongs to the zinc-containing alcohol dehydrogenase family. Class-II subfamily. In terms of assembly, dimer. Zn(2+) serves as cofactor. In terms of tissue distribution, liver specific.

Its subcellular location is the cytoplasm. The catalysed reaction is all-trans-retinol + NAD(+) = all-trans-retinal + NADH + H(+). It catalyses the reaction 9-cis-retinol + NAD(+) = 9-cis-retinal + NADH + H(+). The enzyme catalyses 20-hydroxy-(5Z,8Z,11Z,14Z)-eicosatetraenoate + NAD(+) = 20-oxo-(5Z,8Z,11Z,14Z)-eicosatetraenoate + NADH + H(+). It carries out the reaction 20-oxo-(5Z,8Z,11Z,14Z)-eicosatetraenoate + NAD(+) + H2O = (5Z,8Z,11Z,14Z)-eicosatetraenedioate + NADH + 2 H(+). The catalysed reaction is 1,4-benzoquinone + NADH + H(+) = hydroquinone + NAD(+). Its activity is regulated as follows. Oxidation of 20-HETE is inhibited by low concentrations of N-heptylformamide. Oxidation of 20-HETE is a decreased by 55-65% by either all-trans-retinol or all-trans-retinoic acid. Strongly inhibited by omega-hydroxy fatty acids. In terms of biological role, catalyzes the NAD-dependent oxidation of either all-trans-retinol or 9-cis-retinol. Also oxidizes long chain omega-hydroxy fatty acids, such as 20-HETE, producing both the intermediate aldehyde, 20-oxoarachidonate and the end product, a dicarboxylic acid, (5Z,8Z,11Z,14Z)-eicosatetraenedioate. Also catalyzes the reduction of benzoquinones. The sequence is that of All-trans-retinol dehydrogenase [NAD(+)] ADH4 from Mus musculus (Mouse).